A 368-amino-acid chain; its full sequence is CST complex subunit STN1 (368 aa).

The segment at 1–185 is interaction with CTC1; that stretch reads MQPGSSRCEE…KIYDQPFRSS (185 aa). The segment at residues 57 to 155 is a DNA-binding region (OB); that stretch reads VDVLGTVVGV…EIHATAYYKV (99 aa). Winged helix-turn-helix (wHTH) regions lie at residues 191-295 and 296-368; these read EALS…YVTR and EDKD…YTAF.

This sequence belongs to the STN1 family. In terms of assembly, component of the CST complex, composed of TEN1/C17orf106, CTC1/C17orf68 and STN1; in the complex interacts directly with TEN1 and CTC1. Interacts with ACD/TPP1, POT1 and POLA1.

It localises to the nucleus. The protein resides in the chromosome. Its subcellular location is the telomere. Component of the CST complex proposed to act as a specialized replication factor promoting DNA replication under conditions of replication stress or natural replication barriers such as the telomere duplex. The CST complex binds single-stranded DNA with high affinity in a sequence-independent manner, while isolated subunits bind DNA with low affinity by themselves. Initially the CST complex has been proposed to protect telomeres from DNA degradation. However, the CST complex has been shown to be involved in several aspects of telomere replication. The CST complex inhibits telomerase and is involved in telomere length homeostasis; it is proposed to bind to newly telomerase-synthesized 3' overhangs and to terminate telomerase action implicating the association with the ACD:POT1 complex thus interfering with its telomerase stimulation activity. The CST complex is also proposed to be involved in fill-in synthesis of the telomeric C-strand probably implicating recruitment and activation of DNA polymerase alpha. The CST complex facilitates recovery from many forms of exogenous DNA damage; seems to be involved in the re-initiation of DNA replication at repaired forks and/or dormant origins. Required for efficicient replication of the duplex region of the telomere. Promotes efficient replication of lagging-strand telomeres. Promotes general replication start following replication-fork stalling implicating new origin firing. May be in involved in C-strand fill-in during late S/G2 phase independent of its role in telomere duplex replication. The protein is CST complex subunit STN1 of Macaca fascicularis (Crab-eating macaque).